The sequence spans 279 residues: DegV domain-containing protein M6_Spy1246 (279 aa).

Positions 4–278 (IKIVTDSSIT…EGAFAVMVRY (275 aa)) constitute a DegV domain. Hexadecanoate is bound by residues Thr62 and Ser95.

In terms of biological role, may bind long-chain fatty acids, such as palmitate, and may play a role in lipid transport or fatty acid metabolism. This chain is DegV domain-containing protein M6_Spy1246, found in Streptococcus pyogenes serotype M6 (strain ATCC BAA-946 / MGAS10394).